Consider the following 30-residue polypeptide: Cyclotide hypa-A (30 aa).

Positions 1-30 (GIPCAESCVYIPCTITALLGCSCKNKVCYN) form a cross-link, cyclopeptide (Gly-Asn). 3 disulfides stabilise this stretch: Cys-4–Cys-21, Cys-8–Cys-23, and Cys-13–Cys-28.

Post-translationally, this is a cyclic peptide.

In terms of biological role, probably participates in a plant defense mechanism. The protein is Cyclotide hypa-A of Pombalia parviflora (Violetilla).